Consider the following 98-residue polypeptide: Integration host factor subunit beta (98 aa).

It belongs to the bacterial histone-like protein family. In terms of assembly, heterodimer of an alpha and a beta chain.

This protein is one of the two subunits of integration host factor, a specific DNA-binding protein that functions in genetic recombination as well as in transcriptional and translational control. The protein is Integration host factor subunit beta of Marinobacter nauticus (strain ATCC 700491 / DSM 11845 / VT8) (Marinobacter aquaeolei).